The sequence spans 702 residues: uncharacterized protein (702 aa).

5 stretches are compositionally biased toward low complexity: residues 306-384 (NNNN…NNNN), 488-511 (PTKT…TNIT), 559-590 (QQSQ…NNNN), 603-612 (SNQNSNNNNQ), and 621-639 (NNNN…NNNN). Disordered stretches follow at residues 306 to 385 (NNNN…NNNE), 488 to 513 (PTKT…ITYG), and 551 to 645 (STMN…NSRY). The 153-residue stretch at 337-489 (NNINNNINNN…IKSLDILSPT (153 aa)) folds into the VPS9 domain.

This is an uncharacterized protein from Dictyostelium discoideum (Social amoeba).